We begin with the raw amino-acid sequence, 335 residues long: Pregnancy-specific beta-1-glycoprotein 2 (335 aa).

Residues 1–34 (MGPLSAPPCTEHIKWKGLLVTASLLNFWNLPTTA) form the signal peptide. The region spanning 35-144 (QVTIEAQPPK…TGYFTFTLYL (110 aa)) is the Ig-like V-type domain. N-linked (GlcNAc...) asparagine glycosylation is found at N61, N104, N111, and N199. Ig-like C2-type domains follow at residues 147 to 234 (PKPS…VTLN) and 239 to 317 (PDLP…TSLT). Cystine bridges form between C169-C217 and C261-C301.

It belongs to the immunoglobulin superfamily. CEA family.

The protein resides in the secreted. This chain is Pregnancy-specific beta-1-glycoprotein 2 (PSG2), found in Homo sapiens (Human).